A 261-amino-acid polypeptide reads, in one-letter code: MSGEIKWLRQLNLFFVAMSFFTRIPVPSWVVIDSDKLNKASRYFGLVGLLIGLICALVFWLAQLILPASIAILLAMVAGVLVTGAFHEDGLADTADGFGGGWTVEDKLRIMKDSRLGSYGALSLGLVLLLKWQLLVELALYSPMAAVSALVAGHTLSRVVASSLIFSEQYVRDDDTSKSKPIAQDQQLNDLFILIASGIFVLLWLNGVAAFVLFITLWLVRILLGGFFRKQIGGYTGDTLGAAQQISEVCCYLVILAVGLS.

A run of 5 helical transmembrane segments spans residues 12 to 32, 46 to 66, 67 to 87, 120 to 140, and 199 to 219; these read NLFFVAMSFFTRIPVPSWVVI, LVGLLIGLICALVFWLAQLIL, PASIAILLAMVAGVLVTGAFH, GALSLGLVLLLKWQLLVELAL, and IFVLLWLNGVAAFVLFITLWL.

It belongs to the CobS family. It depends on Mg(2+) as a cofactor.

The protein resides in the cell inner membrane. It carries out the reaction alpha-ribazole + adenosylcob(III)inamide-GDP = adenosylcob(III)alamin + GMP + H(+). The enzyme catalyses alpha-ribazole 5'-phosphate + adenosylcob(III)inamide-GDP = adenosylcob(III)alamin 5'-phosphate + GMP + H(+). It functions in the pathway cofactor biosynthesis; adenosylcobalamin biosynthesis; adenosylcobalamin from cob(II)yrinate a,c-diamide: step 7/7. Joins adenosylcobinamide-GDP and alpha-ribazole to generate adenosylcobalamin (Ado-cobalamin). Also synthesizes adenosylcobalamin 5'-phosphate from adenosylcobinamide-GDP and alpha-ribazole 5'-phosphate. In Shewanella frigidimarina (strain NCIMB 400), this protein is Adenosylcobinamide-GDP ribazoletransferase.